The chain runs to 287 residues: Pentatricopeptide repeat-containing protein At4g18975, chloroplastic (287 aa).

A chloroplast-targeting transit peptide spans Met1–Arg34. PPR repeat units follow at residues Thr165 to Ser199 and Pro201 to Pro235.

Belongs to the PPR family. P subfamily.

It is found in the plastid. The protein resides in the chloroplast. This is Pentatricopeptide repeat-containing protein At4g18975, chloroplastic from Arabidopsis thaliana (Mouse-ear cress).